The sequence spans 272 residues: Phosphatidylglycerol--prolipoprotein diacylglyceryl transferase (272 aa).

Helical transmembrane passes span 17–37 (LQVHWYGLMYLLAFLCAWGLA), 55–75 (LVFYGALGVVLGGRIGYVLFY), 90–110 (VWTGGMSFHGGFLGVMIAMLF), 125–145 (FIAPCVPTGLMLGRIGNFIGG), 174–194 (PSQIYQALCEGLLLFIILWWF), 202–222 (MAVSALFLMGYGVARFVMEFF), and 230–250 (GFILFGWMTKGQILTVPMLLI). Position 138 (Arg138) interacts with a 1,2-diacyl-sn-glycero-3-phospho-(1'-sn-glycerol).

This sequence belongs to the Lgt family.

It localises to the cell inner membrane. The enzyme catalyses L-cysteinyl-[prolipoprotein] + a 1,2-diacyl-sn-glycero-3-phospho-(1'-sn-glycerol) = an S-1,2-diacyl-sn-glyceryl-L-cysteinyl-[prolipoprotein] + sn-glycerol 1-phosphate + H(+). The protein operates within protein modification; lipoprotein biosynthesis (diacylglyceryl transfer). Functionally, catalyzes the transfer of the diacylglyceryl group from phosphatidylglycerol to the sulfhydryl group of the N-terminal cysteine of a prolipoprotein, the first step in the formation of mature lipoproteins. The protein is Phosphatidylglycerol--prolipoprotein diacylglyceryl transferase of Acinetobacter baumannii (strain SDF).